Reading from the N-terminus, the 343-residue chain is Protein RecA (343 aa).

64 to 71 (GPESSGKT) provides a ligand contact to ATP.

Belongs to the RecA family.

Its subcellular location is the cytoplasm. Functionally, can catalyze the hydrolysis of ATP in the presence of single-stranded DNA, the ATP-dependent uptake of single-stranded DNA by duplex DNA, and the ATP-dependent hybridization of homologous single-stranded DNAs. It interacts with LexA causing its activation and leading to its autocatalytic cleavage. The polypeptide is Protein RecA (Bacillus thuringiensis (strain Al Hakam)).